Reading from the N-terminus, the 219-residue chain is Glutathione S-transferase (219 aa).

The region spanning 2–89 (SQPILGYWDI…YLGRKYKLNG (88 aa)) is the GST N-terminal domain. Glutathione is bound by residues 8–9 (YW), 44–47 (RSEW), Lys51, 60–61 (NL), and 73–74 (QT). The 117-residue stretch at 91–207 (NDHEEIRISM…YIKKQQPKTF (117 aa)) folds into the GST C-terminal domain. A substrate-binding site is contributed by Tyr117.

The protein belongs to the GST superfamily. Mu family. In terms of assembly, homodimer.

Its subcellular location is the cytoplasm. It carries out the reaction RX + glutathione = an S-substituted glutathione + a halide anion + H(+). The chain is Glutathione S-transferase from Dermatophagoides pteronyssinus (European house dust mite).